A 443-amino-acid polypeptide reads, in one-letter code: Ribosomal protein uS12 methylthiotransferase RimO (443 aa).

The MTTase N-terminal domain occupies 5–115 (PNIGFISLGC…VMKHVHKYVP (111 aa)). [4Fe-4S] cluster-binding residues include cysteine 14, cysteine 50, cysteine 79, cysteine 147, cysteine 151, and cysteine 154. A Radical SAM core domain is found at 133–374 (LTPKHYAYLK…MQVQQRISAA (242 aa)). In terms of domain architecture, TRAM spans 377 to 443 (QQKVGKTLAV…ADEYDLWGTC (67 aa)).

It belongs to the methylthiotransferase family. RimO subfamily. [4Fe-4S] cluster serves as cofactor.

Its subcellular location is the cytoplasm. The enzyme catalyses L-aspartate(89)-[ribosomal protein uS12]-hydrogen + (sulfur carrier)-SH + AH2 + 2 S-adenosyl-L-methionine = 3-methylsulfanyl-L-aspartate(89)-[ribosomal protein uS12]-hydrogen + (sulfur carrier)-H + 5'-deoxyadenosine + L-methionine + A + S-adenosyl-L-homocysteine + 2 H(+). Its function is as follows. Catalyzes the methylthiolation of an aspartic acid residue of ribosomal protein uS12. This Actinobacillus pleuropneumoniae serotype 7 (strain AP76) protein is Ribosomal protein uS12 methylthiotransferase RimO.